The following is a 77-amino-acid chain: Sec-independent protein translocase protein TatA (77 aa).

The chain crosses the membrane as a helical span at residues 3–23; it reads VFGIGLPELIVILVVALLIFG. The disordered stretch occupies residues 56–77; the sequence is TAALEEEQQAKAEAESPREISP. Residues 63–77 are compositionally biased toward basic and acidic residues; the sequence is QQAKAEAESPREISP.

Belongs to the TatA/E family. Forms a complex with TatC.

The protein resides in the cell inner membrane. In terms of biological role, part of the twin-arginine translocation (Tat) system that transports large folded proteins containing a characteristic twin-arginine motif in their signal peptide across membranes. TatA could form the protein-conducting channel of the Tat system. The sequence is that of Sec-independent protein translocase protein TatA from Thermosynechococcus vestitus (strain NIES-2133 / IAM M-273 / BP-1).